Consider the following 260-residue polypeptide: Ribosomal RNA small subunit methyltransferase J (260 aa).

S-adenosyl-L-methionine contacts are provided by residues 108–109 (RD), 124–125 (ER), and Asp-178.

This sequence belongs to the methyltransferase superfamily. RsmJ family.

Its subcellular location is the cytoplasm. The enzyme catalyses guanosine(1516) in 16S rRNA + S-adenosyl-L-methionine = N(2)-methylguanosine(1516) in 16S rRNA + S-adenosyl-L-homocysteine + H(+). Its function is as follows. Specifically methylates the guanosine in position 1516 of 16S rRNA. The sequence is that of Ribosomal RNA small subunit methyltransferase J from Ectopseudomonas mendocina (strain ymp) (Pseudomonas mendocina).